Reading from the N-terminus, the 261-residue chain is 5-oxoprolinase subunit A (261 aa).

This sequence belongs to the LamB/PxpA family. Forms a complex composed of PxpA, PxpB and PxpC.

The enzyme catalyses 5-oxo-L-proline + ATP + 2 H2O = L-glutamate + ADP + phosphate + H(+). Its function is as follows. Catalyzes the cleavage of 5-oxoproline to form L-glutamate coupled to the hydrolysis of ATP to ADP and inorganic phosphate. This is 5-oxoprolinase subunit A from Symbiobacterium thermophilum (strain DSM 24528 / JCM 14929 / IAM 14863 / T).